The sequence spans 576 residues: Putative export ATP-binding/permease protein RP696 (576 aa).

Residues 20–303 form the ABC transmembrane type-1 domain; it reads LIIVMISLLS…IFELLSEMHL (284 aa). 6 helical membrane-spanning segments follow: residues 21 to 41, 61 to 81, 135 to 155, 158 to 178, 242 to 262, and 277 to 297; these read IIVM…GSIF, ILYI…RSYF, FLSF…LMFF, FKLA…LIKF, ALFF…IVWI, and IISF…IFEL. Residues 336-572 enclose the ABC transporter domain; that stretch reads IEFKNVDFTY…SEIYRNICRE (237 aa). 371–378 contacts ATP; that stretch reads GRSGAGKS.

Belongs to the ABC transporter superfamily. As to quaternary structure, homodimer.

It localises to the cell inner membrane. Part of an ABC transporter complex. Transmembrane domains (TMD) form a pore in the inner membrane and the ATP-binding domain (NBD) is responsible for energy generation. This chain is Putative export ATP-binding/permease protein RP696, found in Rickettsia prowazekii (strain Madrid E).